The chain runs to 81 residues: Large ribosomal subunit protein bL31B (81 aa).

This sequence belongs to the bacterial ribosomal protein bL31 family. Type B subfamily. As to quaternary structure, part of the 50S ribosomal subunit.

The protein is Large ribosomal subunit protein bL31B of Halalkalibacterium halodurans (strain ATCC BAA-125 / DSM 18197 / FERM 7344 / JCM 9153 / C-125) (Bacillus halodurans).